A 67-amino-acid polypeptide reads, in one-letter code: Nigrocin-2GRc (67 aa).

An N-terminal signal peptide occupies residues 1–22; that stretch reads MFTMKKSMLLLFFLGTISLSLC. Residues 23-46 constitute a propeptide that is removed on maturation; that stretch reads EQERNADEEERRDEEVAKMEEIKR. Cysteine 61 and cysteine 67 are oxidised to a cystine.

In terms of tissue distribution, expressed by the skin glands.

It is found in the secreted. Its function is as follows. Antimicrobial peptide active at least against the Gram-positive bacterium S.aureus but with otherwise unclear activity spectrum. Lacks hemolytic activity against rabbit or human erythrocytes. The protein is Nigrocin-2GRc of Odorrana grahami (Yunnanfu frog).